Reading from the N-terminus, the 24-residue chain is Superoxide dismutase [Cu-Zn] (24 aa).

This sequence belongs to the Cu-Zn superoxide dismutase family. In terms of assembly, homodimer. It depends on Cu cation as a cofactor. Zn(2+) serves as cofactor.

The protein localises to the cytoplasm. It carries out the reaction 2 superoxide + 2 H(+) = H2O2 + O2. Destroys radicals which are normally produced within the cells and which are toxic to biological systems. The polypeptide is Superoxide dismutase [Cu-Zn] (sod1) (Aquarana catesbeiana (American bullfrog)).